A 116-amino-acid polypeptide reads, in one-letter code: Iron-sulfur cluster insertion protein ErpA (116 aa).

Iron-sulfur cluster is bound by residues C44, C108, and C110.

It belongs to the HesB/IscA family. Homodimer. Iron-sulfur cluster serves as cofactor.

In terms of biological role, required for insertion of 4Fe-4S clusters for at least IspG. The sequence is that of Iron-sulfur cluster insertion protein ErpA from Nitrosococcus oceani (strain ATCC 19707 / BCRC 17464 / JCM 30415 / NCIMB 11848 / C-107).